The following is a 140-amino-acid chain: Nucleoside diphosphate kinase (140 aa).

ATP is bound by residues Lys11, Phe59, Arg87, Thr93, Arg104, and Asn114. Residue His117 is the Pros-phosphohistidine intermediate of the active site.

This sequence belongs to the NDK family. Homotetramer. The cofactor is Mg(2+).

It localises to the cytoplasm. The catalysed reaction is a 2'-deoxyribonucleoside 5'-diphosphate + ATP = a 2'-deoxyribonucleoside 5'-triphosphate + ADP. It carries out the reaction a ribonucleoside 5'-diphosphate + ATP = a ribonucleoside 5'-triphosphate + ADP. Its function is as follows. Major role in the synthesis of nucleoside triphosphates other than ATP. The ATP gamma phosphate is transferred to the NDP beta phosphate via a ping-pong mechanism, using a phosphorylated active-site intermediate. This is Nucleoside diphosphate kinase from Rhodopseudomonas palustris (strain BisB5).